Here is a 172-residue protein sequence, read N- to C-terminus: Large ribosomal subunit protein bL17 (172 aa).

Residues 123–172 (ATGSKRAQTEEAASQEPAAEAGKQPAEGATSVQTAEAADASQAEGEAEEK) form a disordered region. Residues 132–143 (EEAASQEPAAEA) are compositionally biased toward low complexity.

It belongs to the bacterial ribosomal protein bL17 family. Part of the 50S ribosomal subunit. Contacts protein L32.

The chain is Large ribosomal subunit protein bL17 from Thermobifida fusca (strain YX).